A 642-amino-acid polypeptide reads, in one-letter code: Threonine--tRNA ligase (642 aa).

Positions 1–61 (MPVITLPDGS…ENDAQLSIIT (61 aa)) constitute a TGS domain. A catalytic region spans residues 243-534 (DHRKIGKQLD…LTEEFAGFFP (292 aa)). Residue Lys286 is modified to N6-acetyllysine. Zn(2+) is bound by residues Cys334, His385, and His511.

It belongs to the class-II aminoacyl-tRNA synthetase family. Homodimer. Zn(2+) serves as cofactor.

Its subcellular location is the cytoplasm. It carries out the reaction tRNA(Thr) + L-threonine + ATP = L-threonyl-tRNA(Thr) + AMP + diphosphate + H(+). Catalyzes the attachment of threonine to tRNA(Thr) in a two-step reaction: L-threonine is first activated by ATP to form Thr-AMP and then transferred to the acceptor end of tRNA(Thr). Also edits incorrectly charged L-seryl-tRNA(Thr). The polypeptide is Threonine--tRNA ligase (Escherichia coli O8 (strain IAI1)).